Reading from the N-terminus, the 274-residue chain is Pyrroline-5-carboxylate reductase 3 (274 aa).

An N-acetylalanine modification is found at alanine 2.

The protein belongs to the pyrroline-5-carboxylate reductase family. As to quaternary structure, homodecamer; composed of 5 homodimers.

It localises to the cytoplasm. It catalyses the reaction L-proline + NADP(+) = (S)-1-pyrroline-5-carboxylate + NADPH + 2 H(+). The catalysed reaction is L-proline + NAD(+) = (S)-1-pyrroline-5-carboxylate + NADH + 2 H(+). Its pathway is amino-acid biosynthesis; L-proline biosynthesis; L-proline from L-glutamate 5-semialdehyde: step 1/1. Oxidoreductase that catalyzes the last step in proline biosynthesis, which corresponds to the reduction of pyrroline-5-carboxylate (P5C) to L-proline using NAD(P)H. Proline is synthesized from either glutamate or ornithine; both are converted to P5C, and then to proline via pyrroline-5-carboxylate reductases (PYCRs). PYCR3 is exclusively linked to the biosynthesis of proline from ornithine. The sequence is that of Pyrroline-5-carboxylate reductase 3 from Rattus norvegicus (Rat).